We begin with the raw amino-acid sequence, 593 residues long: Meiosis-specific APC/C activator protein AMA1 (593 aa).

Basic residues predominate over residues 1–11 (MATPHLYHRYN). A disordered region spans residues 1–26 (MATPHLYHRYNSKSSNKNINSSGNST). A compositionally biased stretch (low complexity) spans 12–25 (SKSSNKNINSSGNS). The C-box signature appears at 29–35 (DRFIPKS). Residues 94-109 (SSISSSSESQVTRSGS) show a composition bias toward low complexity. Residues 94 to 125 (SSISSSSESQVTRSGSARASRNDYSKLTKEQK) form a disordered region. Positions 113 to 125 (SRNDYSKLTKEQK) are enriched in basic and acidic residues. WD repeat units follow at residues 226–264 (RNDFYSNLISWSRTTNNVLVGLGCSVYIWSEKEGAVSIL), 271–310 (EKRDLVTCVSFCPYNTYFIVGTKFGRILLYDQKEFFHSSN), 323–364 (ESFK…FPIK), 388–427 (AQAQQVCGISLNEHANLLAVGGNDNSCSLWDISDLDKPIK), 432–474 (PHKA…LLDE), and 525–564 (PNPLRVLSAVISPSSMAICVATNDETIRFYELWNDKEEII).

This sequence belongs to the WD repeat CDC20/Fizzy family. In terms of assembly, interacts with CDC16.

Functionally, activator protein that regulates the ubiquitin ligase activity and substrate specificity of the anaphase promoting complex/cyclosome (APC/C). Required for the ubiquitination and subsequent degradation of the B-type cyclin CLB1 by the APC/C complex during meiosis. Required for meiosis I, late meiotic gene expression and spore wall assembly. This is Meiosis-specific APC/C activator protein AMA1 (AMA1) from Saccharomyces cerevisiae (strain ATCC 204508 / S288c) (Baker's yeast).